Consider the following 129-residue polypeptide: M-zodatoxin-Lt8k (129 aa).

Positions methionine 1–serine 20 are cleaved as a signal peptide. The propeptide occupies lysine 21–arginine 60.

This sequence belongs to the cationic peptide 06 (cytoinsectotoxin) family. Expressed by the venom gland.

The protein localises to the secreted. Its function is as follows. Insecticidal, cytolytic and antimicrobial peptide. Forms voltage-dependent, ion-permeable channels in membranes. At high concentration causes cell membrane lysis. The sequence is that of M-zodatoxin-Lt8k (cit 1-10) from Lachesana tarabaevi (Spider).